A 490-amino-acid polypeptide reads, in one-letter code: Acetyl-coenzyme A carboxylase carboxyl transferase subunit beta, chloroplastic (490 aa).

In terms of domain architecture, CoA carboxyltransferase N-terminal spans 228 to 490 (LWVQCENCYG…FKLHAFFPLN (263 aa)). Residues Cys232, Cys235, Cys251, and Cys254 each contribute to the Zn(2+) site. A C4-type zinc finger spans residues 232-254 (CENCYGLNYKKLLKSKMNICDQC).

This sequence belongs to the AccD/PCCB family. Acetyl-CoA carboxylase is a heterohexamer composed of biotin carboxyl carrier protein, biotin carboxylase and 2 subunits each of ACCase subunit alpha and ACCase plastid-coded subunit beta (accD). The cofactor is Zn(2+).

The protein localises to the plastid. Its subcellular location is the chloroplast stroma. The catalysed reaction is N(6)-carboxybiotinyl-L-lysyl-[protein] + acetyl-CoA = N(6)-biotinyl-L-lysyl-[protein] + malonyl-CoA. It functions in the pathway lipid metabolism; malonyl-CoA biosynthesis; malonyl-CoA from acetyl-CoA: step 1/1. Its function is as follows. Component of the acetyl coenzyme A carboxylase (ACC) complex. Biotin carboxylase (BC) catalyzes the carboxylation of biotin on its carrier protein (BCCP) and then the CO(2) group is transferred by the transcarboxylase to acetyl-CoA to form malonyl-CoA. The chain is Acetyl-coenzyme A carboxylase carboxyl transferase subunit beta, chloroplastic from Eucalyptus globulus subsp. globulus (Tasmanian blue gum).